The sequence spans 135 residues: Flagellar assembly factor FliW 2 (135 aa).

The protein belongs to the FliW family. As to quaternary structure, interacts with translational regulator CsrA and flagellin(s).

The protein resides in the cytoplasm. Acts as an anti-CsrA protein, binds CsrA and prevents it from repressing translation of its target genes, one of which is flagellin. Binds to flagellin and participates in the assembly of the flagellum. This chain is Flagellar assembly factor FliW 2, found in Helicobacter acinonychis (strain Sheeba).